A 219-amino-acid polypeptide reads, in one-letter code: Adenylate kinase (219 aa).

ATP is bound at residue 10 to 15; that stretch reads GAGKGT. Positions 30–59 are NMP; sequence STGDMLRAAIREGTELGLKAKSVMESGGLV. AMP-binding positions include threonine 31, arginine 36, 57–59, 85–88, and glutamine 92; these read GLV and GFPR. The LID stretch occupies residues 122 to 159; that stretch reads GRRQHPASGRVYHIEYNPPKVEGKDDVTGEELVQRPDD. Residues arginine 123 and 132 to 133 contribute to the ATP site; that span reads VY. Residues arginine 156 and arginine 167 each contribute to the AMP site. Arginine 202 lines the ATP pocket.

This sequence belongs to the adenylate kinase family. Monomer.

It is found in the cytoplasm. The enzyme catalyses AMP + ATP = 2 ADP. It functions in the pathway purine metabolism; AMP biosynthesis via salvage pathway; AMP from ADP: step 1/1. In terms of biological role, catalyzes the reversible transfer of the terminal phosphate group between ATP and AMP. Plays an important role in cellular energy homeostasis and in adenine nucleotide metabolism. This chain is Adenylate kinase, found in Acinetobacter baylyi (strain ATCC 33305 / BD413 / ADP1).